The sequence spans 989 residues: Cellulose synthase A catalytic subunit 4 [UDP-forming] (989 aa).

At 1–184 the chain is on the cytoplasmic side; sequence MMESGVPPCA…SRIIPISKNK (184 aa). 8 residues coordinate Zn(2+): Cys-9, Cys-12, Cys-20, Cys-23, Cys-28, Cys-31, Cys-43, and Cys-46. The segment at 9 to 47 adopts an RING-type; degenerate zinc-finger fold; sequence CAACGDDAHAACRACSYALCKACLDEDAAEGRTTCARCG. Basic residues predominate over residues 138–149; it reads KKEKKASAKKAA. The disordered stretch occupies residues 138–158; sequence KKEKKASAKKAAAKAQAPPVE. A helical transmembrane segment spans residues 185–205; it reads LTPYRAVIIMRLVVLGLFFHY. The Extracellular segment spans residues 206-213; that stretch reads RITNPVYS. The helical transmembrane segment at 214–234 threads the bilayer; the sequence is AFGLWMTSVICEIWFGFSWIL. The Cytoplasmic segment spans residues 235-772; the sequence is DQFPKWCPIN…INTIVYPFTS (538 aa). Positions 272, 278, 279, and 308 each coordinate UDP-alpha-D-glucose. Residue Asp-308 is part of the active site. A coiled-coil region spans residues 362–389; the sequence is VKERRAMKRDYEEYKVRINALVAKAQKT. Lys-449 provides a ligand contact to UDP-alpha-D-glucose. Residues Lys-450 and Asp-474 each coordinate Mn(2+). Asp-688 is an active-site residue. Residues 773-793 form a helical membrane-spanning segment; it reads LPLIAYCCLPAICLLTGKFII. Residues 794 to 798 lie on the Extracellular side of the membrane; that stretch reads PTLSN. Residues 799–819 traverse the membrane as a helical segment; the sequence is AATIWFLGLFISIIVTSVLEL. Residues 820 to 835 are Cytoplasmic-facing; it reads RWSGIGIEDWWRNEQF. The chain crosses the membrane as a helical span at residues 836–856; that stretch reads WVIGGVSAHLFAVFQGILKMI. At 857-884 the chain is on the extracellular side; it reads AGLDTNFTVTAKATDDTEFGELYVFKWT. N-linked (GlcNAc...) asparagine glycosylation occurs at Asn-862. The chain crosses the membrane as a helical span at residues 885 to 905; the sequence is TVLIPPTSILVLNLVGVVAGF. Residues 906 to 916 lie on the Cytoplasmic side of the membrane; sequence SDALNSGYESW. Residues 917–937 traverse the membrane as a helical segment; the sequence is GPLFGKVFFAMWVIMHLYPFL. Over 938–946 the chain is Extracellular; the sequence is KGLMGRQNR. The helical transmembrane segment at 947-967 threads the bilayer; the sequence is TPTIVVLWSVLLASVFSLLWV. The Cytoplasmic portion of the chain corresponds to 968 to 989; it reads KIDPFIGSSETTTTNSCANFDC.

Belongs to the glycosyltransferase 2 family. Plant cellulose synthase subfamily. Requires Mn(2+) as cofactor. It depends on Zn(2+) as a cofactor.

It localises to the cell membrane. It catalyses the reaction [(1-&gt;4)-beta-D-glucosyl](n) + UDP-alpha-D-glucose = [(1-&gt;4)-beta-D-glucosyl](n+1) + UDP + H(+). It functions in the pathway glycan metabolism; plant cellulose biosynthesis. In terms of biological role, catalytic subunit of cellulose synthase terminal complexes ('rosettes'), required for beta-1,4-glucan microfibril crystallization, a major mechanism of the cell wall formation. Involved in the secondary cell wall formation. This Oryza sativa subsp. indica (Rice) protein is Cellulose synthase A catalytic subunit 4 [UDP-forming] (CESA4).